Reading from the N-terminus, the 223-residue chain is MKLIKPLTCALALAMSGMAFADVTVSVPDDVSVLAANGEKAKLSGGFFASEKALTLPDGVNQVVFRYAPYFNQGNDRLSVESDVIVARFDTANAELTIEVPKYRNMRDAEENIKDLDWKLVDGSGKAVAVDQDKLIKPGMQIGRDYVREIEDYNRAGGTAAVAFAGAATMQPVTLPAKIPEDMKQARATAVKADSTAEEMLHFWYQKADAETKARFKAYINQQ.

Positions 1–21 (MKLIKPLTCALALAMSGMAFA) are cleaved as a signal peptide.

The protein belongs to the UPF0319 family.

This Vibrio parahaemolyticus serotype O3:K6 (strain RIMD 2210633) protein is UPF0319 protein VPA1584.